We begin with the raw amino-acid sequence, 322 residues long: Transcription factor WRKY45-2 (322 aa).

Residues 67 to 110 (GGEGSEVQSEVTCGGGASAGGKRKAPAANRKANCRRRTQQSSGN) are disordered. Residues 112-180 (VVVKNLDDGQ…YIGEHTCRDP (69 aa)) constitute a DNA-binding region (WRKY). Positions 256–284 (SDQEEVLSSLTPGSSAARGGGVAGPFGPD) are disordered.

Belongs to the WRKY group III family. In terms of tissue distribution, expressed in aleurone cells.

It is found in the nucleus. Functionally, transcriptional activator involved in defense responses against pathogens. Acts as a positive regulator of defense responses against the rice blast fungus Magnaporthe oryzae. Acts as a positive regulator of defense responses against the bacterial blight Xanthomonas oryzae pv oryzae (Xoo) and the bacterial streak Xanthomonas oryzae pv oryzicola (Xoc). Acts as a positive regulator of abscisic acid (ABA) signaling that suppresses growth of seedlings. Acts as a negative regulator of salt stress response. Acts as a negative regulator of cold stress response. Acts as a negative regulator of drought stress response. The chain is Transcription factor WRKY45-2 from Oryza sativa subsp. indica (Rice).